The sequence spans 326 residues: 5-dehydro-2-deoxygluconokinase (326 aa).

It belongs to the carbohydrate kinase PfkB family.

It carries out the reaction 5-dehydro-2-deoxy-D-gluconate + ATP = 6-phospho-5-dehydro-2-deoxy-D-gluconate + ADP + H(+). It participates in polyol metabolism; myo-inositol degradation into acetyl-CoA; acetyl-CoA from myo-inositol: step 5/7. Functionally, catalyzes the phosphorylation of 5-dehydro-2-deoxy-D-gluconate (2-deoxy-5-keto-D-gluconate or DKG) to 6-phospho-5-dehydro-2-deoxy-D-gluconate (DKGP). The polypeptide is 5-dehydro-2-deoxygluconokinase (Shouchella clausii (strain KSM-K16) (Alkalihalobacillus clausii)).